Consider the following 290-residue polypeptide: Plasma membrane ascorbate-dependent reductase CYBRD1 (290 aa).

Residues 1 to 7 are Cytoplasmic-facing; sequence MAMEGYR. A helical transmembrane segment spans residues 8–32; that stretch reads GFLGLLVSALLVGFLSVIFVLIWVL. The Cytochrome b561 domain maps to 15–220; the sequence is SALLVGFLSV…FGALIFWIVT (206 aa). Residues 33–47 are Extracellular-facing; it reads HFREGLGWNGSGLEF. The chain crosses the membrane as a helical span at residues 48-69; that stretch reads NWHPVLAVTGFVFIQGIAIIVY. Residues His-50, Arg-70, and Lys-79 each contribute to the heme b site. At 70-78 the chain is on the cytoplasmic side; the sequence is RLPWTWKCS. L-ascorbate contacts are provided by Lys-79 and Lys-83. The helical transmembrane segment at 79–105 threads the bilayer; it reads KLLMKSIHAGLNAVAAILAIISVVAVF. His-86 serves as a coordination point for heme b. At 106–118 the chain is on the extracellular side; it reads EYHNVQKVPHMYS. Residue His-108 participates in Fe(3+) binding. Heme b contacts are provided by residues 115-118 and His-120; that span reads HMYS. The helical transmembrane segment at 119 to 144 threads the bilayer; the sequence is LHSWVGLTALILYIQQLVVGFFVFLL. The Cytoplasmic portion of the chain corresponds to 145-151; it reads PWAPPSL. Arg-152 is an L-ascorbate binding site. A helical transmembrane segment spans residues 152 to 179; that stretch reads RAIVMPIHVYSGLLLFGTVIATVLMGVT. His-159 and Glu-180 together coordinate heme b. The Extracellular portion of the chain corresponds to 180-197; the sequence is EKLFFVLKHPSYHSFPPE. A helical membrane pass occupies residues 198–222; sequence GVFTNTLGLLILVFGALIFWIVTRP. The Cytoplasmic segment spans residues 223–290; sequence QWKRPREPGS…LADSGQRSTM (68 aa). Lys-225 provides a ligand contact to heme b. Position 232 is a phosphoserine (Ser-232). Residues 257–290 form a disordered region; it reads SMDAADPADAESSSEGAARKRTLGLADSGQRSTM. Positions 260-272 are enriched in low complexity; it reads AADPADAESSSEG. Position 289 is a phosphothreonine (Thr-289).

As to quaternary structure, homodimer. Heme b serves as cofactor. Highly expressed in the brush-border membrane of duodenal enterocytes (at protein level). Also expressed in liver and spleen.

It localises to the cell membrane. The protein localises to the apical cell membrane. The enzyme catalyses Fe(3+)(out) + L-ascorbate(in) = monodehydro-L-ascorbate radical(in) + Fe(2+)(out) + H(+). It catalyses the reaction Cu(2+)(out) + L-ascorbate(in) = Cu(+)(out) + monodehydro-L-ascorbate radical(in) + H(+). The catalysed reaction is monodehydro-L-ascorbate radical(out) + L-ascorbate(in) = monodehydro-L-ascorbate radical(in) + L-ascorbate(out). Its function is as follows. Plasma membrane reductase that uses cytoplasmic ascorbate as an electron donor to reduce extracellular Fe(3+) into Fe(2+). Probably functions in dietary iron absorption at the brush border of duodenal enterocytes by producing Fe(2+), the divalent form of iron that can be transported into enterocytes. It is also able to reduce extracellular monodehydro-L-ascorbate and may be involved in extracellular ascorbate regeneration by erythrocytes in blood. May also act as a ferrireductase in airway epithelial cells. May also function as a cupric transmembrane reductase. The chain is Plasma membrane ascorbate-dependent reductase CYBRD1 from Mus musculus (Mouse).